The sequence spans 100 residues: Small ribosomal subunit protein uS14c (100 aa).

This sequence belongs to the universal ribosomal protein uS14 family. As to quaternary structure, part of the 30S ribosomal subunit.

The protein localises to the plastid. Its subcellular location is the chloroplast. Binds 16S rRNA, required for the assembly of 30S particles. This is Small ribosomal subunit protein uS14c from Capsella bursa-pastoris (Shepherd's purse).